An 849-amino-acid chain; its full sequence is Protein translocase subunit SecA (849 aa).

Residues glutamine 85, 103-107 (GEGKT), and aspartate 493 each bind ATP. The Zn(2+) site is built by cysteine 832, cysteine 834, cysteine 843, and histidine 844.

This sequence belongs to the SecA family. Monomer and homodimer. Part of the essential Sec protein translocation apparatus which comprises SecA, SecYEG and auxiliary proteins SecDF. Other proteins may also be involved. It depends on Zn(2+) as a cofactor.

It is found in the cell membrane. Its subcellular location is the cytoplasm. It carries out the reaction ATP + H2O + cellular proteinSide 1 = ADP + phosphate + cellular proteinSide 2.. In terms of biological role, part of the Sec protein translocase complex. Interacts with the SecYEG preprotein conducting channel. Has a central role in coupling the hydrolysis of ATP to the transfer of proteins into and across the cell membrane, serving as an ATP-driven molecular motor driving the stepwise translocation of polypeptide chains across the membrane. The sequence is that of Protein translocase subunit SecA from Streptococcus thermophilus (strain ATCC BAA-491 / LMD-9).